The following is a 564-amino-acid chain: Septation ring formation regulator EzrA (564 aa).

The Extracellular segment spans residues 1 to 4 (MVLY). A helical membrane pass occupies residues 5 to 23 (IILAIIVIILIAVGVLFYL). Topologically, residues 24–564 (RSNKRQIIEK…KHIEEEVIKQ (541 aa)) are cytoplasmic. Coiled-coil stretches lie at residues 99-138 (SFNA…YKDN), 190-223 (DGNY…LIRE), 271-300 (LISR…LIEH), 350-435 (VRQF…RRLL), and 471-550 (VKQL…ESVE).

Belongs to the EzrA family.

It is found in the cell membrane. Negative regulator of FtsZ ring formation; modulates the frequency and position of FtsZ ring formation. Inhibits FtsZ ring formation at polar sites. Interacts either with FtsZ or with one of its binding partners to promote depolymerization. The sequence is that of Septation ring formation regulator EzrA from Staphylococcus aureus (strain NCTC 8325 / PS 47).